The sequence spans 226 residues: Apoptosis regulator OPG045 (226 aa).

Residues 32–37 (NVDHDY) are essential and sufficient to inhibit host NLRP1.

This sequence belongs to the orthopoxvirus OPG045 family. Homodimer. Interacts with host pro-apoptotic protein BCL2L11 (via BH3 domain). Interacts with host NLRP1. Interacts with host BAK.

The protein resides in the host mitochondrion outer membrane. The protein localises to the host cytoplasm. Functionally, plays a role in evading host innate immune response by inhibiting host inflammasome activation. Interacts with and inhibits NLR-mediated interleukin-1 beta/IL1B production in infected cells. At the host mitochondria outer membrane, interacts with the BH3 domain of host BAK and prevents BAK from binding active BAX. In turn, host apoptosis is inhibited. This chain is Apoptosis regulator OPG045 (OPG045), found in Vaccinia virus (strain Western Reserve) (VACV).